The sequence spans 945 residues: Splicing factor, suppressor of white-apricot homolog (945 aa).

2 disordered regions span residues 1 to 28 and 156 to 185; these read MYGA…GTGT and DYYD…EENE. Composition is skewed to basic and acidic residues over residues 9 to 21 and 169 to 178; these read AKPE…KEEA and PSKQREKNEA. An SURP motif 1 repeat occupies 211 to 253; the sequence is IIERTANFVCKQGAQFEIMLKAKQARNSQFDFLRFDHYLNPYY. Residues 271–301 form a disordered region; sequence SKNEEKKKSGPTSDNEEEDDEEDGSYLHPSL. Residue Ser-283 is modified to Phosphoserine. Positions 284 to 294 are enriched in acidic residues; that stretch reads DNEEEDDEEDG. Position 315 is an N6-acetyllysine (Lys-315). 2 disordered regions span residues 332-355 and 403-448; these read KAQA…PSQV and SSSP…PVAI. Residues 335–352 show a composition bias toward low complexity; it reads ADSSAPAPPTADGTPAQP. Residues 412 to 426 are compositionally biased toward pro residues; it reads VPPPPGTTPPPPPTT. Residues 427 to 447 are compositionally biased toward low complexity; that stretch reads AEPSSGVTSTTTTTSALAPVA. The SURP motif 2 repeat unit spans residues 458-498; it reads VIDKLAEYVARNGLKFETSVRAKNDQRFEFLQPWHQYNAYY. Disordered stretches follow at residues 512–564, 589–680, and 712–921; these read GSTQ…KSTV, PLEK…QAER, and DTGV…VQSK. Over residues 514–527 the composition is skewed to low complexity; sequence TQAASTAEEAPTET. Over residues 528 to 540 the composition is skewed to acidic residues; the sequence is AVEESGEAGEDGA. Over residues 589 to 598 the composition is skewed to basic and acidic residues; it reads PLEKNRVKLD. Ser-601 and Ser-621 each carry phosphoserine. Low complexity predominate over residues 615-630; it reads SSVANPSPAAAPPSVA. Residues 632-686 adopt a coiled-coil conformation; it reads EEKKPQLTQEELEAKQAKQKLEDRLAAAAREKLAQASKESKEKQLQAERKRKAAL. At Thr-639 the chain carries Phosphothreonine. 2 stretches are compositionally biased toward basic and acidic residues: residues 643–679 and 733–752; these read LEAK…LQAE and KPPE…EERE. 2 stretches are compositionally biased toward basic residues: residues 753 to 787 and 795 to 810; these read KKKK…KAKH and TVRR…RRRA. Basic and acidic residues predominate over residues 811–821; it reads HSPERRREERS. Ser-829 and Ser-831 each carry phosphoserine. The span at 835 to 861 shows a compositional bias: basic residues; sequence SRKRTRSRSPHEKKKKRRSRSRTKAKA. A compositionally biased stretch (low complexity) spans 871-894; that stretch reads QAAQRPSAHSAHSASISPVESRGS. Over residues 895–908 the composition is skewed to basic and acidic residues; that stretch reads SQERSRGVSQEKDG. Ser-899 and Ser-903 each carry phosphoserine. Over residues 909–920 the composition is skewed to low complexity; it reads QISSAIVSSVQS.

The protein localises to the nucleus. Functionally, plays a role as an alternative splicing regulator. Regulates its own expression at the level of RNA processing. Also regulates the splicing of fibronectin and CD45 genes. May act, at least in part, by interaction with other R/S-containing splicing factors. Represses the splicing of MAPT/Tau exon 10. In Mus musculus (Mouse), this protein is Splicing factor, suppressor of white-apricot homolog (Sfswap).